The following is a 64-amino-acid chain: Small ribosomal subunit protein bS21 (64 aa).

It belongs to the bacterial ribosomal protein bS21 family.

The polypeptide is Small ribosomal subunit protein bS21 (Oenococcus oeni (strain ATCC BAA-331 / PSU-1)).